The following is a 444-amino-acid chain: Tol-Pal system protein TolB (444 aa).

Positions 1–19 are cleaved as a signal peptide; it reads MRNIIYFILSLLFSVTSYA.

The protein belongs to the TolB family. As to quaternary structure, the Tol-Pal system is composed of five core proteins: the inner membrane proteins TolA, TolQ and TolR, the periplasmic protein TolB and the outer membrane protein Pal. They form a network linking the inner and outer membranes and the peptidoglycan layer.

The protein localises to the periplasm. In terms of biological role, part of the Tol-Pal system, which plays a role in outer membrane invagination during cell division and is important for maintaining outer membrane integrity. The chain is Tol-Pal system protein TolB from Rickettsia conorii (strain ATCC VR-613 / Malish 7).